The primary structure comprises 213 residues: A-type ATP synthase subunit D (213 aa).

This sequence belongs to the V-ATPase D subunit family. As to quaternary structure, has multiple subunits with at least A(3), B(3), C, D, E, F, H, I and proteolipid K(x).

Its subcellular location is the cell membrane. Functionally, component of the A-type ATP synthase that produces ATP from ADP in the presence of a proton gradient across the membrane. The protein is A-type ATP synthase subunit D of Thermoplasma acidophilum (strain ATCC 25905 / DSM 1728 / JCM 9062 / NBRC 15155 / AMRC-C165).